The primary structure comprises 339 residues: UDP-N-acetylglucosamine/UDP-N-acetylgalactosamine transporter nstp-4 (339 aa).

8 helical membrane passes run 44 to 64 (LSSTAVVCAEIIKLITCFFVI), 94 to 114 (LKVAVPAIMYVIQNNLLFFAL), 148 to 168 (YNWMALILLTAGVALVQYPSG), 186 to 206 (ILGLGAVLAACFSSGFAGVYF), 224 to 244 (LAFFSVFGALLVCWLYDWQAI), 255 to 275 (GVIWIVVLLQAYGGLVIALVV), 281 to 301 (ILKGFAVSLSIILSSFTSWLV), and 305 to 325 (LTITTTFAIGATVVIFATFLY).

The protein belongs to the nucleotide-sugar transporter family. SLC35A subfamily. Widely expressed, including in pharynx and pharyngeal gland cells, seam cells, spermatheca, stomatointestinal muscle, vulva, and body wall muscle.

The protein localises to the golgi apparatus membrane. Functionally, uridine diphosphate-N-acetylglucosamine (UDP-GlcNAc) transporter in the Golgi apparatus. UDP-N-acetylgalactosamine (UDP-GalNAc) transporter in the Golgi apparatus. Apparently transports UDP-GlcNAc and UDP-GalNAc simultaneously, and independently, by an unknown mechanism. Functions redundantly with nucleotide sugar transporter srf-3. May be involved in gonadal development. The chain is UDP-N-acetylglucosamine/UDP-N-acetylgalactosamine transporter nstp-4 from Caenorhabditis elegans.